The primary structure comprises 311 residues: Methionyl-tRNA formyltransferase (311 aa).

110-113 (SLLP) lines the (6S)-5,6,7,8-tetrahydrofolate pocket.

It belongs to the Fmt family.

The catalysed reaction is L-methionyl-tRNA(fMet) + (6R)-10-formyltetrahydrofolate = N-formyl-L-methionyl-tRNA(fMet) + (6S)-5,6,7,8-tetrahydrofolate + H(+). Attaches a formyl group to the free amino group of methionyl-tRNA(fMet). The formyl group appears to play a dual role in the initiator identity of N-formylmethionyl-tRNA by promoting its recognition by IF2 and preventing the misappropriation of this tRNA by the elongation apparatus. This Streptococcus pneumoniae (strain P1031) protein is Methionyl-tRNA formyltransferase.